A 577-amino-acid polypeptide reads, in one-letter code: Cytochrome P450 714D1 (577 aa).

Topologically, residues 1 to 3 (MES) are lumenal. The helical; Signal-anchor for type III membrane protein transmembrane segment at 4–24 (FFVFFTAAALPVVVAAAVIAG) threads the bilayer. The Cytoplasmic segment spans residues 25-577 (LCITAAWLAR…STAPVHSSHN (553 aa)). The segment at 315–343 (REHGGKAAPPSPPERDFLGSIIENSGGQP) is disordered. Cysteine 504 serves as a coordination point for heme.

It belongs to the cytochrome P450 family. Heme serves as cofactor. As to expression, expressed in rapidly elongating or dividing tissues, including the shoot apical meristem, the intercalary meristem and elongating zones of internodes, and panicle but not in young seedlings, roots and leaves. During the heading stage, the highest expression is detected in the flowering spikelets, anthers, the divisional zone and the node of the uppermost internode.

It is found in the endoplasmic reticulum membrane. Functionally, catalyzes the 16alpha,17-epoxidation on non-13-hydroxylated gibberellins (GAs), including GA4, GA9, and GA12. No activity with GA1, GA20, GA53 or ent-kaurenoic acid. Reduces the biological activity of GAs. The protein is Cytochrome P450 714D1 (CYP714D1) of Oryza sativa subsp. japonica (Rice).